A 475-amino-acid chain; its full sequence is Ribulose bisphosphate carboxylase large chain (475 aa).

Residues 1-2 constitute a propeptide that is removed on maturation; it reads MS. Pro-3 is subject to N-acetylproline. The residue at position 14 (Lys-14) is an N6,N6,N6-trimethyllysine. Residues Asn-123 and Thr-173 each contribute to the substrate site. Lys-175 serves as the catalytic Proton acceptor. Residue Lys-177 participates in substrate binding. Lys-201, Asp-203, and Glu-204 together coordinate Mg(2+). Lys-201 carries the N6-carboxylysine modification. His-294 serves as the catalytic Proton acceptor. Residues Arg-295, His-327, and Ser-379 each coordinate substrate.

It belongs to the RuBisCO large chain family. Type I subfamily. Heterohexadecamer of 8 large chains and 8 small chains; disulfide-linked. The disulfide link is formed within the large subunit homodimers. Mg(2+) serves as cofactor. Post-translationally, the disulfide bond which can form in the large chain dimeric partners within the hexadecamer appears to be associated with oxidative stress and protein turnover.

Its subcellular location is the plastid. It is found in the chloroplast. The enzyme catalyses 2 (2R)-3-phosphoglycerate + 2 H(+) = D-ribulose 1,5-bisphosphate + CO2 + H2O. It catalyses the reaction D-ribulose 1,5-bisphosphate + O2 = 2-phosphoglycolate + (2R)-3-phosphoglycerate + 2 H(+). RuBisCO catalyzes two reactions: the carboxylation of D-ribulose 1,5-bisphosphate, the primary event in carbon dioxide fixation, as well as the oxidative fragmentation of the pentose substrate in the photorespiration process. Both reactions occur simultaneously and in competition at the same active site. The protein is Ribulose bisphosphate carboxylase large chain of Vitis vinifera (Grape).